Reading from the N-terminus, the 312-residue chain is Methionyl-tRNA formyltransferase (312 aa).

Residue serine 117–proline 120 coordinates (6S)-5,6,7,8-tetrahydrofolate.

The protein belongs to the Fmt family.

The catalysed reaction is L-methionyl-tRNA(fMet) + (6R)-10-formyltetrahydrofolate = N-formyl-L-methionyl-tRNA(fMet) + (6S)-5,6,7,8-tetrahydrofolate + H(+). In terms of biological role, attaches a formyl group to the free amino group of methionyl-tRNA(fMet). The formyl group appears to play a dual role in the initiator identity of N-formylmethionyl-tRNA by promoting its recognition by IF2 and preventing the misappropriation of this tRNA by the elongation apparatus. This Bordetella bronchiseptica (strain ATCC BAA-588 / NCTC 13252 / RB50) (Alcaligenes bronchisepticus) protein is Methionyl-tRNA formyltransferase.